The following is a 235-amino-acid chain: Ubiquinone biosynthesis O-methyltransferase (235 aa).

R40, G60, D81, and M125 together coordinate S-adenosyl-L-methionine.

The protein belongs to the methyltransferase superfamily. UbiG/COQ3 family.

It carries out the reaction a 3-demethylubiquinol + S-adenosyl-L-methionine = a ubiquinol + S-adenosyl-L-homocysteine + H(+). The enzyme catalyses a 3-(all-trans-polyprenyl)benzene-1,2-diol + S-adenosyl-L-methionine = a 2-methoxy-6-(all-trans-polyprenyl)phenol + S-adenosyl-L-homocysteine + H(+). It participates in cofactor biosynthesis; ubiquinone biosynthesis. O-methyltransferase that catalyzes the 2 O-methylation steps in the ubiquinone biosynthetic pathway. This is Ubiquinone biosynthesis O-methyltransferase from Nitrosomonas europaea (strain ATCC 19718 / CIP 103999 / KCTC 2705 / NBRC 14298).